A 627-amino-acid chain; its full sequence is Glutamine--fructose-6-phosphate aminotransferase [isomerizing] (627 aa).

The Nucleophile; for GATase activity role is filled by Cys-2. One can recognise a Glutamine amidotransferase type-2 domain in the interval Cys-2–Leu-224. SIS domains lie at Leu-293 to Thr-442 and Leu-476 to Pro-617. Residue Lys-622 is the For Fru-6P isomerization activity of the active site.

As to quaternary structure, homodimer.

It is found in the cytoplasm. It catalyses the reaction D-fructose 6-phosphate + L-glutamine = D-glucosamine 6-phosphate + L-glutamate. Its function is as follows. Catalyzes the first step in hexosamine metabolism, converting fructose-6P into glucosamine-6P using glutamine as a nitrogen source. The sequence is that of Glutamine--fructose-6-phosphate aminotransferase [isomerizing] from Nostoc sp. (strain PCC 9229).